The chain runs to 287 residues: MKRIFLLIATNLAVLLVASIVMSILGVNTSTMGGLLVFAAIFGFGGAFISLAISKWMAKKAMGCEVITMPRDGTERWLVETVARQAQQAGIKMPEVAIYQSPEMNAFATGPSKDNSLVAVSTGLLYGMSQDEVEAVLAHEVSHVANGDMVTLTLIQGVVNTFVIFAARVVAGIINNVVSSNDEEGEGLGMFAYMAVVFVLDMLFGILASIIVAYFSRIREYRADEGAARLAGKHKMIAALERLRQGPESTAMPAQMSAFGINGKRSMAEMMMSHPPLEKRIAALQAR.

The next 2 membrane-spanning stretches (helical) occupy residues 4–24 (IFLLIATNLAVLLVASIVMSI) and 33–53 (GGLLVFAAIFGFGGAFISLAI). His-139 serves as a coordination point for Zn(2+). Glu-140 is a catalytic residue. His-143 contributes to the Zn(2+) binding site. Helical transmembrane passes span 154–174 (LIQGVVNTFVIFAARVVAGII) and 195–215 (AVVFVLDMLFGILASIIVAYF). Position 220 (Glu-220) interacts with Zn(2+).

This sequence belongs to the peptidase M48B family. Requires Zn(2+) as cofactor.

Its subcellular location is the cell inner membrane. This chain is Protease HtpX, found in Shewanella putrefaciens (strain CN-32 / ATCC BAA-453).